Here is an 87-residue protein sequence, read N- to C-terminus: Large ribosomal subunit protein bL27 (87 aa).

Belongs to the bacterial ribosomal protein bL27 family.

This chain is Large ribosomal subunit protein bL27, found in Phocaeicola vulgatus (strain ATCC 8482 / DSM 1447 / JCM 5826 / CCUG 4940 / NBRC 14291 / NCTC 11154) (Bacteroides vulgatus).